Consider the following 500-residue polypeptide: Versicolorin B desaturase (500 aa).

The chain crosses the membrane as a helical span at residues Phe-3 to Gly-23. 2 N-linked (GlcNAc...) asparagine glycosylation sites follow: Asn-243 and Asn-400. Heme is bound at residue Cys-438.

Belongs to the cytochrome P450 family. Requires heme as cofactor.

It is found in the membrane. The enzyme catalyses versicolorin B + NADPH + O2 + H(+) = versicolorin A + NADP(+) + 2 H2O. It participates in mycotoxin biosynthesis; aflatoxin biosynthesis. In terms of biological role, versicolorin B desaturase; part of the gene cluster that mediates the biosynthesis of aflatoxins, a group of polyketide-derived furanocoumarins, and part of the most toxic and carcinogenic compounds among the known mycotoxins. The four major aflatoxins produced by A.parasiticus are aflatoxin B1 (AFB1), aflatoxin B2 (AFB2), aflatoxin G1 (AFG1) and aflatoxin G2 (AFG2). Within the aflatoxin pathway, the versicolorin B desaturase aflL catalyzes the conversion of versicolorin B (VERB) to versicolorin A (VERA). The biosynthesis of aflatoxins begins with the norsolorinic acid synthase aflC that combines a hexanoyl starter unit produced by the fatty acid synthase aflA/aflB and 7 malonyl-CoA extender units to synthesize the precursor NOR. The second step is the conversion of NOR to averantin and requires the norsolorinic acid ketoreductase aflD, which catalyzes the dehydration of norsolorinic acid to form (1'S)-averantin. The norsolorinic acid reductases aflE and aflF may also play a role in the conversion of NOR to AVN. The cytochrome P450 monooxygenase aflG then catalyzes the hydroxylation of AVN to 5'hydroxyaverantin (HAVN). The next step is performed by the 5'-hydroxyaverantin dehydrogenase aflH that transforms HAVN to 5'-oxoaverantin (OAVN) which is further converted to averufin (AVF) by aflK that plays a dual role in the pathway, as a 5'-oxoaverantin cyclase that mediates conversion of 5'-oxoaverantin, as well as a versicolorin B synthase in a later step in the pathway. The averufin oxidase aflI catalyzes the conversion of AVF to versiconal hemiacetal acetate (VHA). VHA is then the substrate for the versiconal hemiacetal acetate esterase aflJ to yield versiconal (VAL). Versicolorin B synthase aflK then converts VAL to versicolorin B (VERB) by closing the bisfuran ring of aflatoxin which is required for DNA-binding, thus giving to aflatoxin its activity as a mutagen. Then, the activity of the versicolorin B desaturase aflL leads to versicolorin A (VERA). A branch point starts from VERB since it can also be converted to dihydrodemethylsterigmatocystin (DMDHST), probably also by aflL, VERA being a precursor for aflatoxins B1 and G1, and DMDHST for aflatoxins B2 and G2. Next, the versicolorin reductase aflM and the cytochrome P450 monooxygenase aflN are involved in conversion of VERA to demethylsterigmatocystin (DMST). AflX and aflY seem also involved in this step, through probable aflX-mediated epoxide ring-opening step following versicolorin A oxidation and aflY-mediated Baeyer-Villiger oxidation required for the formation of the xanthone ring. The methyltransferase aflO then leads to the modification of DMST to sterigmatocystin (ST), and of DMDHST to dihydrosterigmatocystin (DHST). Both ST and DHST are then substrates of the O-methyltransferase aflP to yield O-methylsterigmatocystin (OMST) and dihydro-O-methylsterigmatocystin (DHOMST), respectively. Finally OMST is converted to aflatoxins B1 and G1, and DHOMST to aflatoxins B2 and G2, via the action of several enzymes including O-methylsterigmatocystin oxidoreductase aflQ, the cytochrome P450 monooxygenase aflU, but also the NADH-dependent flavin oxidoreductase nadA which is specifically required for the synthesis of AFG1. This Aspergillus parasiticus (strain ATCC 56775 / NRRL 5862 / SRRC 143 / SU-1) protein is Versicolorin B desaturase.